The chain runs to 628 residues: Kelch-like protein diablo (628 aa).

Residues 1–56 are disordered; that stretch reads MGDLPGSTGGGSGPAAAGNASGNSSSAGNTGLGVAGTTGVDRPPSPARLSHTSEKH. Low complexity predominate over residues 14–29; it reads PAAAGNASGNSSSAGN. The BTB domain occupies 74–141; the sequence is CDVVLNVGGR…CYTAHIIVEE (68 aa). Residues 176–278 enclose the BACK domain; the sequence is CLGIRAFADT…SPKFLVGTVG (103 aa). Kelch repeat units follow at residues 325–371, 373–419, 420–466, 468–513, 515–560, and 561–607; these read VLFA…VLND, LYAV…VLDG, FLYA…VLGG, LYAI…VFNN, IYAV…VVNG, and QLYA…VMRA.

The protein operates within protein modification; protein ubiquitination. Probable substrate-specific adapter of an E3 ubiquitin-protein ligase complex which mediates the ubiquitination and subsequent proteasomal degradation of target proteins. May have a role in synapse differentiation and growth. The polypeptide is Kelch-like protein diablo (Drosophila persimilis (Fruit fly)).